A 242-amino-acid chain; its full sequence is Ribosomal RNA small subunit methyltransferase G (242 aa).

S-adenosyl-L-methionine contacts are provided by residues G78, L83, 130 to 131, and R151; that span reads AE.

Belongs to the methyltransferase superfamily. RNA methyltransferase RsmG family.

The protein resides in the cytoplasm. Specifically methylates the N7 position of guanine in position 518 of 16S rRNA. This Salinispora tropica (strain ATCC BAA-916 / DSM 44818 / JCM 13857 / NBRC 105044 / CNB-440) protein is Ribosomal RNA small subunit methyltransferase G.